A 36-amino-acid polypeptide reads, in one-letter code: Pancreatic polypeptide (36 aa).

Position 36 is a tyrosine amide (Tyr-36).

It belongs to the NPY family.

It is found in the secreted. In terms of biological role, hormone secreted by pancreatic cells that acts as a regulator of pancreatic and gastrointestinal functions. The chain is Pancreatic polypeptide (PPY) from Struthio camelus (Common ostrich).